Consider the following 656-residue polypeptide: Ribosome quality control complex subunit 1 (656 aa).

Over residues 1–11 (MSSRALRKLQR) the composition is skewed to basic residues. Disordered regions lie at residues 1–35 (MSSR…FSST), 51–122 (NNAI…LESS), and 634–656 (LFTS…GQGD). A compositionally biased stretch (acidic residues) spans 17–32 (LLEEALDSESDEDDEF). The span at 51–63 (NNAINSEAEKSVS) shows a compositional bias: basic and acidic residues. A phosphoserine mark is found at S56, S61, and S63. Over residues 83 to 101 (KKAKNKKKKKKQQKKKKVT) the composition is skewed to basic residues. Residues 102 to 122 (GKRDLDNQSSDNEKLEGLESS) show a composition bias toward basic and acidic residues. S110 and S111 each carry phosphoserine.

Belongs to the TCF25 family. In terms of assembly, component of the ribosome quality control complex (RQC), composed of the E3 ubiquitin ligase rkr1/ltn1, rqc1 and mtr1/rqc2, as well as cdc48 and its ubiquitin-binding cofactors. RQC forms a stable complex with 60S ribosomal subunits.

The protein localises to the cytoplasm. Its function is as follows. Component of the ribosome quality control complex (RQC), a ribosome-associated complex that mediates ubiquitination and extraction of incompletely synthesized nascent chains for proteasomal degradation. Within the RQC complex, rqc1 is essential for the recruitment of cdc48 to incompletely synthesized nascent polypeptides that are ubiquitinated by rkr1/ltn1. This Schizosaccharomyces pombe (strain 972 / ATCC 24843) (Fission yeast) protein is Ribosome quality control complex subunit 1.